A 254-amino-acid chain; its full sequence is Peroxisomal membrane protein 11-2 (254 aa).

The Cytoplasmic segment spans residues 1 to 113 (MVTAAGSPSS…YHPHPHVHPL (113 aa)). Residues 114–134 (LVLLAYGGQGVYNFLEQFAWL) traverse the membrane as a helical segment. At 135–227 (AKAGLLPARL…TVGDVTGRKG (93 aa)) the chain is on the lumenal side. A helical membrane pass occupies residues 228-247 (LLGSSTLMASAGLLSALISV). The Cytoplasmic segment spans residues 248-254 (HKNWNSC).

The protein belongs to the peroxin-11 family.

The protein resides in the peroxisome membrane. In terms of biological role, involved in peroxisomal proliferation. The polypeptide is Peroxisomal membrane protein 11-2 (PEX11-2) (Oryza sativa subsp. japonica (Rice)).